The primary structure comprises 48 residues: uncharacterized protein (48 aa).

The segment at 1-48 (MTKIPINIPATSGKIKFGITPSSNKSPSLSPSPSNGQLGGGRGYILEP) is disordered. Over residues 21–36 (PSSNKSPSLSPSPSNG) the composition is skewed to low complexity. Over residues 37-48 (QLGGGRGYILEP) the composition is skewed to gly residues.

This is an uncharacterized protein from Dictyostelium discoideum (Social amoeba).